The chain runs to 360 residues: D-alanine--D-alanine ligase (360 aa).

Residues 134 to 343 (KILAQRVGVP…YTELITRLIQ (210 aa)) enclose the ATP-grasp domain. Residue 169–224 (AEKLGHDMFVKPSNQGSSVGVNHVTNAEEYAAALEEAFKYDDKVLVEETVPGTEVE) coordinates ATP. 3 residues coordinate Mg(2+): Asp-297, Glu-310, and Asn-312.

Belongs to the D-alanine--D-alanine ligase family. The cofactor is Mg(2+). It depends on Mn(2+) as a cofactor.

It localises to the cytoplasm. The enzyme catalyses 2 D-alanine + ATP = D-alanyl-D-alanine + ADP + phosphate + H(+). It participates in cell wall biogenesis; peptidoglycan biosynthesis. Functionally, cell wall formation. In Lactobacillus acidophilus (strain ATCC 700396 / NCK56 / N2 / NCFM), this protein is D-alanine--D-alanine ligase.